A 243-amino-acid chain; its full sequence is Nuclear ubiquitous casein and cyclin-dependent kinase substrate 1 (243 aa).

A disordered region spans residues 1–243 (MSRPVRNRKV…SEDDAQSGED (243 aa)). Tyr13 bears the Phosphotyrosine mark. Residues Ser14 and Ser19 each carry the phosphoserine modification. Tyr26 is subject to Phosphotyrosine. Over residues 35-51 (KKIRSSPREAKNKRRSG) the composition is skewed to basic residues. 6 positions are modified to phosphoserine: Ser54, Ser58, Ser61, Ser73, Ser75, and Ser79. Residues 64–77 (KDVKTKKDDSHSAE) are compositionally biased toward basic and acidic residues. Positions 91-100 (QQRQAASKAA) are enriched in low complexity. The span at 111–124 (VGSEEEQEEEDEAP) shows a compositional bias: acidic residues. 4 positions are modified to phosphoserine: Ser113, Ser130, Ser132, and Ser144. Residues 132-145 (SDEDFLVEDDDDSD) are compositionally biased toward acidic residues. A compositionally biased stretch (basic residues) spans 149 to 174 (SKKKNKKMVKKSKPERKEKKMPKPRL). At Thr179 the chain carries Phosphothreonine. Ser181 carries the phosphoserine modification. The segment covering 197–206 (ASKEKTPSPK) has biased composition (basic and acidic residues). Thr202 bears the Phosphothreonine mark. Residues Ser204, Ser214, Ser223, Ser229, Ser234, and Ser240 each carry the phosphoserine modification. The segment covering 232 to 243 (EGSEDDAQSGED) has biased composition (acidic residues).

Does not interact with RAD51. In terms of processing, phosphorylated in an ATM-dependent manner in response to DNA damage. Phosphorylated by CDK1 and casein kinase.

The protein localises to the nucleus. It localises to the chromosome. Functionally, chromatin-associated protein involved in DNA repair by promoting homologous recombination (HR). Binds double-stranded DNA (dsDNA) and secondary DNA structures, such as D-loop structures, but with less affinity than RAD51AP1. The sequence is that of Nuclear ubiquitous casein and cyclin-dependent kinase substrate 1 (NUCKS1) from Bos taurus (Bovine).